The following is a 230-amino-acid chain: Aquaporin Z (230 aa).

The next 2 helical transmembrane spans lie at 9 to 29 and 35 to 55; these read AELIGTFWLVLGGCGSAVLAA and IGVLGVAFAFGLTVLTMAFAI. Positions 64–66 match the NPA 1 motif; it reads NPA. The next 3 helical transmembrane spans lie at 83–103, 131–151, and 160–180; these read LPYVIAQVIGAILAAGVIYLI, LGAGFVSEVVMTAMFLVVIMG, and GFAPIAIGLALTLIHLISIPV. The NPA 2 signature appears at 186–188; sequence NPA. The helical transmembrane segment at 194 to 214 threads the bilayer; that stretch reads ALFVGGWALQQLWLFWVAPLI.

It belongs to the MIP/aquaporin (TC 1.A.8) family. In terms of assembly, homotetramer.

Its subcellular location is the cell inner membrane. The catalysed reaction is H2O(in) = H2O(out). Functionally, channel that permits osmotically driven movement of water in both directions. It is involved in the osmoregulation and in the maintenance of cell turgor during volume expansion in rapidly growing cells. It mediates rapid entry or exit of water in response to abrupt changes in osmolarity. The chain is Aquaporin Z from Pseudomonas putida (strain ATCC 47054 / DSM 6125 / CFBP 8728 / NCIMB 11950 / KT2440).